The primary structure comprises 88 residues: MRLSEAIKHLAVGAVDAESPVELLPAEVVSVSPVEIKLKENSKLIIPEDAIIIPKRMQSGGDDALEPGDRLMTAALTGGQSFFILDKV.

It to B.subtilis YqbR.

This Bacillus subtilis (strain 168) protein is Phage-like element PBSX protein XkdR (xkdR).